The sequence spans 427 residues: Trigger factor (427 aa).

A PPIase FKBP-type domain is found at 160–240 (TDTVIGDVVK…VKEVKRLELP (81 aa)).

This sequence belongs to the FKBP-type PPIase family. Tig subfamily.

It is found in the cytoplasm. It catalyses the reaction [protein]-peptidylproline (omega=180) = [protein]-peptidylproline (omega=0). Its function is as follows. Involved in protein export. Acts as a chaperone by maintaining the newly synthesized protein in an open conformation. Functions as a peptidyl-prolyl cis-trans isomerase. The sequence is that of Trigger factor from Chlorobium limicola (strain DSM 245 / NBRC 103803 / 6330).